The sequence spans 344 residues: Holliday junction branch migration complex subunit RuvB (344 aa).

A large ATPase domain (RuvB-L) region spans residues 1–180; it reads MSRIVSGEAQ…FGIPVRLEFY (180 aa). Leucine 19, arginine 20, glycine 61, lysine 64, threonine 65, threonine 66, arginine 170, tyrosine 180, and arginine 217 together coordinate ATP. Threonine 65 serves as a coordination point for Mg(2+). The segment at 181 to 251 is small ATPAse domain (RuvB-S); it reads THDELARVLL…AAAAALARLD (71 aa). The interval 254–344 is head domain (RuvB-H); it reads EVGLDALDRR…AAPPADLFDK (91 aa). Residues arginine 290, arginine 309, and arginine 314 each coordinate DNA.

This sequence belongs to the RuvB family. As to quaternary structure, homohexamer. Forms an RuvA(8)-RuvB(12)-Holliday junction (HJ) complex. HJ DNA is sandwiched between 2 RuvA tetramers; dsDNA enters through RuvA and exits via RuvB. An RuvB hexamer assembles on each DNA strand where it exits the tetramer. Each RuvB hexamer is contacted by two RuvA subunits (via domain III) on 2 adjacent RuvB subunits; this complex drives branch migration. In the full resolvosome a probable DNA-RuvA(4)-RuvB(12)-RuvC(2) complex forms which resolves the HJ.

It localises to the cytoplasm. It carries out the reaction ATP + H2O = ADP + phosphate + H(+). Functionally, the RuvA-RuvB-RuvC complex processes Holliday junction (HJ) DNA during genetic recombination and DNA repair, while the RuvA-RuvB complex plays an important role in the rescue of blocked DNA replication forks via replication fork reversal (RFR). RuvA specifically binds to HJ cruciform DNA, conferring on it an open structure. The RuvB hexamer acts as an ATP-dependent pump, pulling dsDNA into and through the RuvAB complex. RuvB forms 2 homohexamers on either side of HJ DNA bound by 1 or 2 RuvA tetramers; 4 subunits per hexamer contact DNA at a time. Coordinated motions by a converter formed by DNA-disengaged RuvB subunits stimulates ATP hydrolysis and nucleotide exchange. Immobilization of the converter enables RuvB to convert the ATP-contained energy into a lever motion, pulling 2 nucleotides of DNA out of the RuvA tetramer per ATP hydrolyzed, thus driving DNA branch migration. The RuvB motors rotate together with the DNA substrate, which together with the progressing nucleotide cycle form the mechanistic basis for DNA recombination by continuous HJ branch migration. Branch migration allows RuvC to scan DNA until it finds its consensus sequence, where it cleaves and resolves cruciform DNA. This chain is Holliday junction branch migration complex subunit RuvB, found in Phenylobacterium zucineum (strain HLK1).